A 134-amino-acid chain; its full sequence is Small ribosomal subunit protein uS11 (134 aa).

The protein belongs to the universal ribosomal protein uS11 family. In terms of assembly, part of the 30S ribosomal subunit. Interacts with proteins S7 and S18. Binds to IF-3.

In terms of biological role, located on the platform of the 30S subunit, it bridges several disparate RNA helices of the 16S rRNA. Forms part of the Shine-Dalgarno cleft in the 70S ribosome. In Corynebacterium diphtheriae (strain ATCC 700971 / NCTC 13129 / Biotype gravis), this protein is Small ribosomal subunit protein uS11.